Here is a 256-residue protein sequence, read N- to C-terminus: Major prion protein (256 aa).

An N-terminal signal peptide occupies residues 1 to 24 (MVKSHIGSWILVLFVAMWSDVGLC). Residues 25–233 (KKRPKPGGGW…ESQAYYQRGA (209 aa)) are interaction with GRB2, ERI3 and SYN1. The disordered stretch occupies residues 28–110 (PKPGGGWNTG…QWNKPSKPKT (83 aa)). 5 consecutive repeat copies span residues 54-62 (PQGGGGWGQ), 63-70 (PHGGGWGQ), 71-78 (PHGGGWGQ), 79-86 (PHGGGWGQ), and 87-95 (PHGGGGWGQ). Positions 54-95 (PQGGGGWGQPHGGGWGQPHGGGWGQPHGGGWGQPHGGGGWGQ) are 5 X 8 AA tandem repeats of P-H-G-G-G-W-G-Q. Residues 55–97 (QGGGGWGQPHGGGWGQPHGGGWGQPHGGGWGQPHGGGGWGQGG) are compositionally biased toward gly residues. Cu(2+) contacts are provided by His64, Gly65, Gly66, His72, Gly73, Gly74, His80, Gly81, Gly82, His88, Gly90, and Gly91. An intrachain disulfide couples Cys182 to Cys217. Asn184 and Asn200 each carry an N-linked (GlcNAc...) asparagine glycan. Ala233 carries the GPI-anchor amidated alanine lipid modification. A propeptide spans 234–256 (SVILFSSPPVILLISFLIFLIVG) (removed in mature form).

Belongs to the prion family. As to quaternary structure, monomer and homodimer. Has a tendency to aggregate into amyloid fibrils containing a cross-beta spine, formed by a steric zipper of superposed beta-strands. Soluble oligomers may represent an intermediate stage on the path to fibril formation. Copper binding may promote oligomerization. Interacts with GRB2, APP, ERI3/PRNPIP and SYN1. Mislocalized cytosolically exposed PrP interacts with MGRN1; this interaction alters MGRN1 subcellular location and causes lysosomal enlargement. Interacts with KIAA1191.

The protein resides in the cell membrane. It localises to the golgi apparatus. Its function is as follows. Its primary physiological function is unclear. Has cytoprotective activity against internal or environmental stresses. May play a role in neuronal development and synaptic plasticity. May be required for neuronal myelin sheath maintenance. May play a role in iron uptake and iron homeostasis. Soluble oligomers are toxic to cultured neuroblastoma cells and induce apoptosis (in vitro). Association with GPC1 (via its heparan sulfate chains) targets PRNP to lipid rafts. Also provides Cu(2+) or Zn(2+) for the ascorbate-mediated GPC1 deaminase degradation of its heparan sulfate side chains. The polypeptide is Major prion protein (PRNP) (Ovis canadensis (Bighorn sheep)).